The following is a 256-amino-acid chain: Large ribosomal subunit protein uL2 (256 aa).

Positions 208–230 are disordered; that stretch reads EHPHGGGNHQHIGKASTVKRGTS.

Belongs to the universal ribosomal protein uL2 family. In terms of tissue distribution, in larvae tissues examined: gut, brain imaginal disk, salivary glands, fat body, muscles, epidermis and trachaea.

The protein localises to the cytoplasm. This Drosophila melanogaster (Fruit fly) protein is Large ribosomal subunit protein uL2 (RpL8).